The following is a 623-amino-acid chain: Glutathione import ATP-binding protein GsiA (623 aa).

ABC transporter domains are found at residues 15–269 and 314–564; these read VENL…RALL and LRVR…RKLL. Residues 49 to 56 and 357 to 364 contribute to the ATP site; these read GESGSGKS.

The protein belongs to the ABC transporter superfamily. Glutathione importer (TC 3.A.1.5.11) family. As to quaternary structure, the complex is composed of two ATP-binding proteins (GsiA), two transmembrane proteins (GsiC and GsiD) and a solute-binding protein (GsiB).

The protein resides in the cell inner membrane. The enzyme catalyses glutathione(out) + ATP + H2O = glutathione(in) + ADP + phosphate + H(+). Functionally, part of the ABC transporter complex GsiABCD involved in glutathione import. Responsible for energy coupling to the transport system. The chain is Glutathione import ATP-binding protein GsiA from Shigella dysenteriae serotype 1 (strain Sd197).